The sequence spans 588 residues: Outer membrane transporter CdiB (588 aa).

A POTRA domain is found at 104–179; it reads FTVSSIVVSG…GVLHITVMEG (76 aa).

This sequence belongs to the TPS (TC 1.B.20) family.

The protein localises to the cell outer membrane. Potential outer membrane protein component of a toxin-immunity protein module, which functions as a cellular contact-dependent growth inhibition (CDI) system. CDI modules allow bacteria to communicate with and inhibit the growth of closely related neighboring bacteria in a contact-dependent fashion. This protein may be required for secretion and assembly of the CdiA toxin protein. Inhibitory cells must be in logarithmic (not stationary) phase to inhibit growth of their targets, while the presence of P or S but not type 1 pili protects the target cells against growth inhibition. Functionally, probable member of a two partner secretion pathway (TPS) in which it mediates the secretion of CdiA. The protein is Outer membrane transporter CdiB of Escherichia coli.